The chain runs to 139 residues: Small ribosomal subunit protein bS6 (139 aa).

Positions 118–139 are disordered; the sequence is SFKGGSKIETPTGSESTDIQEK. Over residues 126-139 the composition is skewed to polar residues; it reads ETPTGSESTDIQEK.

It belongs to the bacterial ribosomal protein bS6 family.

Its function is as follows. Binds together with bS18 to 16S ribosomal RNA. The protein is Small ribosomal subunit protein bS6 of Borrelia garinii subsp. bavariensis (strain ATCC BAA-2496 / DSM 23469 / PBi) (Borreliella bavariensis).